Here is a 246-residue protein sequence, read N- to C-terminus: Small ribosomal subunit protein uS2 (246 aa).

Belongs to the universal ribosomal protein uS2 family.

This chain is Small ribosomal subunit protein uS2, found in Pseudomonas aeruginosa (strain LESB58).